Reading from the N-terminus, the 248-residue chain is Myelin protein P0 (248 aa).

The signal sequence occupies residues 1-29; that stretch reads MAPGAPSSSPSPILAALLFSSLVLSPAQA. The Ig-like V-type domain occupies 30 to 143; it reads IVVYTDKEVY…DIVGKTSQVT (114 aa). The Extracellular segment spans residues 30–153; sequence IVVYTDKEVY…LYVFEKVPTR (124 aa). Cys-50 and Cys-127 are disulfide-bonded. Asn-122 carries N-linked (GlcNAc...) (complex) asparagine glycosylation. The helical transmembrane segment at 154–179 threads the bilayer; the sequence is YGVVLGAVIGGVLGVVLLVLLLFYVV. At 180-248 the chain is on the cytoplasmic side; that stretch reads RYCWLRRQAA…GLGESRKDKK (69 aa). Ser-210 bears the Phosphoserine; by PKC mark. The tract at residues 222-248 is disordered; sequence MLDHSRSTKAASEKKAKGLGESRKDKK. A compositionally biased stretch (basic and acidic residues) spans 224–248; it reads DHSRSTKAASEKKAKGLGESRKDKK. A phosphoserine mark is found at Ser-226 and Ser-228. A phosphoserine; by PKC mark is found at Ser-233 and Ser-243.

Belongs to the myelin P0 protein family. Homodimer and homotetramer. In terms of processing, N-glycosylated; contains sulfate-substituted glycan.

Its subcellular location is the cell membrane. In terms of biological role, is an adhesion molecule necessary for normal myelination in the peripheral nervous system. It mediates adhesion between adjacent myelin wraps and ultimately drives myelin compaction. The protein is Myelin protein P0 (MPZ) of Equus caballus (Horse).